We begin with the raw amino-acid sequence, 64 residues long: MKNNTILFTFLIVFLIASQIEAINWDILIDTIKDKLGKRSEDREFFDFFTDDNLAALEKALKEY.

Residues 1–22 form the signal peptide; sequence MKNNTILFTFLIVFLIASQIEA. Leucine 36 bears the Leucine amide mark. A propeptide spanning residues 40-64 is cleaved from the precursor; sequence SEDREFFDFFTDDNLAALEKALKEY.

Belongs to the non-disulfide-bridged peptide (NDBP) superfamily. Short antimicrobial peptide (group 4) family. As to expression, expressed by the venom gland.

The protein resides in the secreted. Functionally, antimicrobial peptide. This is Peptide Ctri9677 from Chaerilus tricostatus (Scorpion).